A 364-amino-acid chain; its full sequence is uncharacterized protein (364 aa).

This is an uncharacterized protein from Escherichia coli (strain K12).